A 177-amino-acid polypeptide reads, in one-letter code: Large ribosomal subunit protein uL6 (177 aa).

Belongs to the universal ribosomal protein uL6 family. As to quaternary structure, part of the 50S ribosomal subunit.

In terms of biological role, this protein binds to the 23S rRNA, and is important in its secondary structure. It is located near the subunit interface in the base of the L7/L12 stalk, and near the tRNA binding site of the peptidyltransferase center. The polypeptide is Large ribosomal subunit protein uL6 (Rhodospirillum rubrum (strain ATCC 11170 / ATH 1.1.1 / DSM 467 / LMG 4362 / NCIMB 8255 / S1)).